The chain runs to 971 residues: Piwi-like protein 2 (971 aa).

At arginine 45 the chain carries Symmetric dimethylarginine. Residue arginine 74 is modified to Omega-N-methylarginine; by PRMT5; alternate. Arginine 74 carries the symmetric dimethylarginine; by PRMT5; alternate modification. At arginine 83 the chain carries Omega-N-methylarginine; alternate. Symmetric dimethylarginine; alternate occurs at positions 83 and 95. Arginine 95 carries the omega-N-methylarginine; by PRMT5; alternate modification. A Symmetric dimethylarginine; by PRMT5; alternate modification is found at arginine 100. An Omega-N-methylarginine; alternate modification is found at arginine 100. Residues 102–124 (LSANMVRKDREEPRSSLPDPSVL) form a disordered region. Arginine 144 and arginine 156 each carry symmetric dimethylarginine. Residues 159–200 (SSIGRGMDKPPSAFGLTARDPPRLPQPPALSPTSLHSADPPP) form a disordered region. Position 163 is a symmetric dimethylarginine; by PRMT5 (arginine 163). Residues 387–500 (SVLDVMHAIY…LLPELSFMTG (114 aa)) enclose the PAZ domain. Residue arginine 549 is modified to Symmetric dimethylarginine; by PRMT5. The Piwi domain maps to 666 to 957 (MVVCIIMGTR…LAFLSGQILH (292 aa)). Catalysis depends on residues aspartate 743, glutamate 781, aspartate 813, and histidine 946.

This sequence belongs to the argonaute family. Piwi subfamily. Interacts with DDX4, MAEL, EIF3A, EIF4E, EIF4G, PRMT5 and WDR77. Associates with EIF4E- and EIF4G-containing m7G cap-binding complexes. Interacts (when methylated on arginine residues) with TDRD1 and TDRKH/TDRD2. Interacts with TDRD12. Component of the PET complex, at least composed of EXD1, PIWIL2, TDRD12 and piRNAs. Interacts with MOV10L1. Interacts with GPAT2. Interacts with Tex19.1 and, probably, Tex19.2. Interacts (via PIWI domain) with BMAL1 and CLOCK. Interacts with GSK3B. Interacts with TEX15. Mg(2+) is required as a cofactor. Arginine methylation by PRMT5 is required for the interaction with Tudor domain-containing protein TDRD1 and subsequent localization to the meiotic nuage, also named P granule. Expressed in adult testis, specifically in spermatocytes and in spermatogonia. Only detected in primordial germ cells of both sexes. Widely expressed in tumors. Also present at early stages of oocyte growth. Present in the mitotic spermatogonia. Not detected in the first stages of meiosis (preleptotene and leptotene). Detected at the late zygotene stage and increases throughout pachytene, declining from this stage onward until expression stops at the early round spermatid stage (at protein level).

Its subcellular location is the cytoplasm. Its function is as follows. Endoribonuclease that plays a central role during spermatogenesis by repressing transposable elements and preventing their mobilization, which is essential for the germline integrity. Plays an essential role in meiotic differentiation of spermatocytes, germ cell differentiation and in self-renewal of spermatogonial stem cells. Its presence in oocytes suggests that it may participate in similar functions during oogenesis in females. Acts via the piRNA metabolic process, which mediates the repression of transposable elements during meiosis by forming complexes composed of piRNAs and Piwi proteins and govern the methylation and subsequent repression of transposons. During piRNA biosynthesis, plays a key role in the piRNA amplification loop, also named ping-pong amplification cycle, by acting as a 'slicer-competent' piRNA endoribonuclease that cleaves primary piRNAs, which are then loaded onto 'slicer-incompetent' PIWIL4. PIWIL2 slicing produces a pre-miRNA intermediate, which is then processed in mature piRNAs, and as well as a 16 nucleotide by-product that is degraded. Required for PIWIL4/MIWI2 nuclear localization and association with secondary piRNAs antisense. Besides their function in transposable elements repression, piRNAs are probably involved in other processes during meiosis such as translation regulation. Indirectly modulates expression of genes such as PDGFRB, SLC2A1, ITGA6, GJA7, THY1, CD9 and STRA8. Represses circadian rhythms by promoting the stability and activity of core clock components BMAL1 and CLOCK by inhibiting GSK3B-mediated phosphorylation and ubiquitination-dependent degradation of these proteins. This Mus musculus (Mouse) protein is Piwi-like protein 2.